We begin with the raw amino-acid sequence, 313 residues long: Porphobilinogen deaminase (313 aa).

At cysteine 242 the chain carries S-(dipyrrolylmethanemethyl)cysteine.

It belongs to the HMBS family. Monomer. The cofactor is dipyrromethane.

The catalysed reaction is 4 porphobilinogen + H2O = hydroxymethylbilane + 4 NH4(+). Its pathway is porphyrin-containing compound metabolism; protoporphyrin-IX biosynthesis; coproporphyrinogen-III from 5-aminolevulinate: step 2/4. In terms of biological role, tetrapolymerization of the monopyrrole PBG into the hydroxymethylbilane pre-uroporphyrinogen in several discrete steps. The sequence is that of Porphobilinogen deaminase from Yersinia pestis bv. Antiqua (strain Angola).